The chain runs to 252 residues: Probable transcriptional regulatory protein Npun_R5651 (252 aa).

The protein belongs to the TACO1 family.

It is found in the cytoplasm. The chain is Probable transcriptional regulatory protein Npun_R5651 from Nostoc punctiforme (strain ATCC 29133 / PCC 73102).